The primary structure comprises 1106 residues: Translation initiation factor IF-2 (1106 aa).

Composition is skewed to low complexity over residues 57-72 (GKAAGGAKAPAKPDAG) and 81-97 (APSTPSQSAGAPASAPP). 2 disordered regions span residues 57–434 (GKAA…QKVH) and 466–497 (PSKPKNLPGNKGARPVALRRRKKETTRQRQRR). Composition is skewed to pro residues over residues 113–123 (PAKPAPSAPPS) and 138–148 (PAKPAPSAPPS). Over residues 172–199 (AKPVAKPASAPAPARPAQPLRPQASNRP) the composition is skewed to low complexity. Pro residues-rich tracts occupy residues 200–214 (PQQPSNRPPARPAAK) and 223–235 (TAPPPRPARPGAP). Composition is skewed to low complexity over residues 251–292 (PNQQ…QQRR), 319–329 (PQGRQGGAPSR), and 395–405 (YRPAAAPGMAG). A compositionally biased stretch (basic and acidic residues) spans 408–422 (RRPDWDDSARLDALR). Residues 482–497 (ALRRRKKETTRQRQRR) show a composition bias toward basic residues. In terms of domain architecture, tr-type G spans 598 to 771 (RRPPVVTVMG…LLVTEVEDLK (174 aa)). The tract at residues 607 to 614 (GHVDHGKT) is G1. 607–614 (GHVDHGKT) is a binding site for GTP. Positions 632–636 (GITQH) are G2. A G3 region spans residues 657–660 (DTPG). Residues 657 to 661 (DTPGH) and 711 to 714 (NKVD) each bind GTP. A G4 region spans residues 711–714 (NKVD). The tract at residues 747-749 (SAL) is G5.

The protein belongs to the TRAFAC class translation factor GTPase superfamily. Classic translation factor GTPase family. IF-2 subfamily.

Its subcellular location is the cytoplasm. One of the essential components for the initiation of protein synthesis. Protects formylmethionyl-tRNA from spontaneous hydrolysis and promotes its binding to the 30S ribosomal subunits. Also involved in the hydrolysis of GTP during the formation of the 70S ribosomal complex. The polypeptide is Translation initiation factor IF-2 (Synechococcus sp. (strain RCC307)).